The primary structure comprises 136 residues: uncharacterized protein (136 aa).

The protein belongs to the mimivirus L163/R849 family.

This is an uncharacterized protein from Acanthamoeba polyphaga mimivirus (APMV).